Reading from the N-terminus, the 399-residue chain is Tryptophan synthase beta chain (399 aa).

At lysine 92 the chain carries N6-(pyridoxal phosphate)lysine.

This sequence belongs to the TrpB family. In terms of assembly, tetramer of two alpha and two beta chains. Requires pyridoxal 5'-phosphate as cofactor.

The enzyme catalyses (1S,2R)-1-C-(indol-3-yl)glycerol 3-phosphate + L-serine = D-glyceraldehyde 3-phosphate + L-tryptophan + H2O. It functions in the pathway amino-acid biosynthesis; L-tryptophan biosynthesis; L-tryptophan from chorismate: step 5/5. Functionally, the beta subunit is responsible for the synthesis of L-tryptophan from indole and L-serine. The polypeptide is Tryptophan synthase beta chain (Legionella pneumophila (strain Paris)).